The sequence spans 495 residues: Germacrene A acid 8-beta-hydroxylase (495 aa).

The chain crosses the membrane as a helical; Signal-anchor for type II membrane protein span at residues 3–23 (PFTTFSLVASSLILLICWALV). Residue Asn-103 is glycosylated (N-linked (GlcNAc...) asparagine). Cys-433 serves as a coordination point for heme.

It belongs to the cytochrome P450 family. Requires heme as cofactor. Mostly expressed in leaves and flowers, and, to a lower extent, in roots and stems.

Its subcellular location is the membrane. The enzyme catalyses germacra-1(10),4,11(13)-trien-12-oate + reduced [NADPH--hemoprotein reductase] + O2 = 8beta-hydroxygermacra-1(10),4,11(13)-trien-12-oate + oxidized [NADPH--hemoprotein reductase] + H2O + H(+). The catalysed reaction is germacra-1(10),4,11(13)-trien-12-oate + reduced [NADPH--hemoprotein reductase] + O2 = 8-epi-inunolide + oxidized [NADPH--hemoprotein reductase] + 2 H2O. It carries out the reaction germacra-1(10),4,11(13)-trien-12-oate + reduced [NADPH--hemoprotein reductase] + O2 = 8alpha-hydroxygermacra-1(10),4,11(13)-trien-12-oate + oxidized [NADPH--hemoprotein reductase] + H2O + H(+). The protein operates within secondary metabolite biosynthesis; terpenoid biosynthesis. In terms of biological role, involved in the biosynthesis of germacrene-derived sesquiterpene lactones. Hydroxylates germacrene A acid to 8-beta-hydroxy-germacrene A and 8-alpha-hydroxy-germacrene A acids. Unlike 8-alpha-hydroxy-germacrene A acid with is spontaneously converted into inunolide (12, 8-alpha), 8-beta-hydroxy-germacrene A cannot undergo spontaneous lactonization. This Inula hupehensis (Inula helianthus-aquatilis subsp. hupehensis) protein is Germacrene A acid 8-beta-hydroxylase.